Here is a 536-residue protein sequence, read N- to C-terminus: Cytochrome P450 monooxygenase phqM (536 aa).

Position 464 (C464) interacts with heme.

It belongs to the cytochrome P450 family. Heme serves as cofactor.

It functions in the pathway alkaloid biosynthesis. Cytochrome P450 monooxygenase; part of the gene cluster that mediates the biosynthesis of paraherquamide, a fungal indole alkaloid that belongs to a family of natural products containing a characteristic bicyclo[2.2.2]diazaoctane core. The first steps in the biosynthesis of paraherquamide is the production of the beta-methyl-proline precursor from L-isoleucine. They require oxidation of a terminally hydroxylated L-isoleucine to the corresponding aldehyde by enzymes which have still to be identified. Spontaneous cyclization and dehydration would yield the 4-methyl pyrolline-5-carboxylic acid, which is then reduced by the pyrroline-5-carboxylate reductase phqD leading to the beta-methyl-proline precursor. The next step of paraherquamide biosynthesis involves coupling of beta-methyl-proline and L-tryptophan by the bimodular NRPS phqB, to produce a monooxopiperazine intermediate. The reductase (R) domain of phqB utilizes NADPH for hydride transfer to reduce the thioester bond of the T domain-tethered linear dipeptide to a hemithioaminal intermediate, which spontaneously cleaves the C-S bond to release the aldehyde product. This compound undergoes spontaneous cyclization and dehydration to give a dienamine which is reverse prenylated at C-2 by the reverse prenyltransferase phqJ. The other prenyltransferase present in the cluster, phqI may be a redundant gene in the pathway. During biosynthetic assembly, the key step to produce the polycyclic core is catalyzed by the bifunctional reductase and intramolecular [4+2] Diels-Alderase, phqE, resulting in formation of the [2.2.2] diazaoctane intermediate preparaherquamide. Following formation of preparaherquamide, an indole 2,3-epoxidation-initiated pinacol-like rearrangement is catalyzed by the phqK FAD-dependent monooxygenase. The prenyltransferase phqA, the cytochrome P450 monooxygenase phqL, and the FAD-linked oxidoreductase phqH (or the cytochrome P450 monooxygenase phqM), are proposed to be involved in the formation of the pyran ring. The FAD-dependent monooxygenase phqK is likely responsible for generation of the spiro-oxindole, and the N-methylation is likely mediated by the phqN methyltransferase leading to the isolable natural product paraherquamide F. However, the order of these biosynthetic steps has still to be determined. In late-stage paraherquamide biosynthesis, the third P450 monooxygenase, phqO, is probably responsible for the C-14 hydroxylation, transforming paraherquamide F to paraherquamide G, and paraherquamide E to the final product paraherquamide A. The expansion from the 6-membered ring pyran (in paraherquamides F and G) to the 7-membered dioxepin ring (in paraherquamides A and E) represents a poorly understood but intriguing process that probably involves the 2-oxoglutarate-dependent dioxygenase phqC. Finally, the remaining members of the paraherquamide cluster, including phqI as well as phqM (or phqH), do not have a clearly prescribed role and appear to be redundant. The protein is Cytochrome P450 monooxygenase phqM of Penicillium fellutanum.